The sequence spans 312 residues: Mevalonate kinase (312 aa).

Residue 104-114 (PISCGLGSSAS) coordinates ATP. D155 serves as the catalytic Proton acceptor.

Belongs to the GHMP kinase family. Mevalonate kinase subfamily. Homodimer. Mg(2+) is required as a cofactor.

It is found in the cytoplasm. It catalyses the reaction (R)-mevalonate + ATP = (R)-5-phosphomevalonate + ADP + H(+). It functions in the pathway isoprenoid biosynthesis; isopentenyl diphosphate biosynthesis via mevalonate pathway; isopentenyl diphosphate from (R)-mevalonate: step 1/3. Farnesyl- and geranyl-pyrophosphates are competitive inhibitors. Slightly inhibited by high concentration of ATP. Its function is as follows. Catalyzes the phosphorylation of (R)-mevalonate (MVA) to (R)-mevalonate 5-phosphate (MVAP). Functions in the mevalonate (MVA) pathway leading to isopentenyl diphosphate (IPP), a key precursor for the biosynthesis of isoprenoid compounds such as archaeal membrane lipids. This Methanocaldococcus jannaschii (strain ATCC 43067 / DSM 2661 / JAL-1 / JCM 10045 / NBRC 100440) (Methanococcus jannaschii) protein is Mevalonate kinase.